The following is a 1213-amino-acid chain: Formin (1213 aa).

Disordered stretches follow at residues 1–24, 66–111, 144–169, 183–216, and 357–489; these read MEGG…SEPD, QANN…EPEP, VHTT…TSKC, GNNQ…PISQ, and DVSK…PKAN. Composition is skewed to basic and acidic residues over residues 187 to 210 and 431 to 464; these read SKEE…DTEL and EAIK…DKSP. Coiled-coil stretches lie at residues 428–450 and 503–572; these read SELE…VFER and EYQA…IGVS. Residues 624-774 form a disordered region; it reads ISTQGENKDS…PRKPAIEPSR (151 aa). Polar residues predominate over residues 636–647; it reads VPSSESVLSCQP. 3 stretches are compositionally biased toward pro residues: residues 650–672, 680–689, and 718–751; these read MLPP…PPPF, LVPPPPPLPT, and PAPP…PPGP. Positions 652–751 constitute an FH1 domain; sequence PPSPPPPPPP…LPPPPPPPGP (100 aa). Over residues 755–764 the composition is skewed to polar residues; that stretch reads FNSTLSSSQG. An FH2 domain is found at 766 to 1182; the sequence is RKPAIEPSRP…KVAQQSVSKL (417 aa). Residues 1050-1125 adopt a coiled-coil conformation; that stretch reads FQASQVKFED…ENAQKCFEET (76 aa). A disordered region spans residues 1193 to 1213; sequence INPTASLKERLRQKEANVNAN.

Belongs to the formin homology family. Cappuccino subfamily. As to expression, present in the adult brain, kidney, brain, heart and intestine and throughout the embryo.

The protein localises to the nucleus. Is important for morphogenesis of limb and kidney and may be involved in determining dorsoventral neural tube polarity and motor neuron induction. It may also have a function in differentiated cells or be involved in maintaining specific differentiated states. This is Formin (LD) from Gallus gallus (Chicken).